Reading from the N-terminus, the 317-residue chain is Taste receptor type 2 member 14 (317 aa).

Over 1 to 7 (MGGVIKS) the chain is Extracellular. Residues 8–28 (IFTFVLIVEFIIGNLGNSFIA) form a helical membrane-spanning segment. The Cytoplasmic segment spans residues 29-55 (LVNCIDWVKGRKISSVDRILTALAISR). A helical transmembrane segment spans residues 56–76 (ISLVWLIFGSWCVSVFFPALF). Residues 77–87 (ATEKMFRMLTN) lie on the Extracellular side of the membrane. Cholesterol is bound by residues Thr-86 and Trp-89. A helical membrane pass occupies residues 88–108 (IWTVINHFSVWLATGLGTFYF). The Cytoplasmic portion of the chain corresponds to 109–129 (LKIANFSNSIFLYLKWRVKKV). Residues 130–150 (VLVLLLVTSVFLFLNIALINI) traverse the membrane as a helical segment. Residues 151–184 (HINASINGYRRNKTCSSDSSNFTRFSSLIVLTST) lie on the Extracellular side of the membrane. N-linked (GlcNAc...) asparagine glycosylation is found at Asn-153, Asn-162, and Asn-171. Residue Val-180 participates in cholesterol binding. The chain crosses the membrane as a helical span at residues 185–205 (VFIFIPFTLSLAMFLLLIFSM). Topologically, residues 206–232 (WKHRKKMQHTVKISGDASTKAHRGVKS) are cytoplasmic. Residues 233–253 (VITFFLLYAIFSLSFFISVWT) form a helical membrane-spanning segment. At 254 to 261 (SERLEENL) the chain is on the extracellular side. The chain crosses the membrane as a helical span at residues 262–282 (IILSQVMGMAYPSCHSCVLIL). Residues Ser-265 and Met-268 each contribute to the cholesterol site. The Cytoplasmic segment spans residues 283–317 (GNKKLRQASLSVLLWLRYMFKDGEPSGHKEFRESS).

This sequence belongs to the G-protein coupled receptor T2R family. As to quaternary structure, core component of the TAS2R14-GNAI1 complex, consisting of TAS2R14, GNAI1, GNB1 and GNG2; within the complex interacts with GNAI1. Core component of the TAS2R14-GNAT3 complex, consisting of TAS2R14, GNAT3, GNB1 and GNG2; within the complex interacts with GNAT3. Core component of the TAS2R14-GNAS2 complex, consisting of TAS2R14, GNAS2, GNB1 and GNG2; within the complex interacts with GNAS2. Highly expressed in cerebellum, pancreas, small intestine and thymus; also expressed in adipose, aorta, skin and tongue, but at significantly lower levels. Expressed in subsets of taste receptor cells of the tongue and palate epithelium and exclusively in gustducin-positive cells. Expressed in testis.

It localises to the membrane. The enzyme catalyses Ca(2+)(in) = Ca(2+)(out). It carries out the reaction 3',5'-cyclic AMP(in) = 3',5'-cyclic AMP(out). Its activity is regulated as follows. Basal activity is enhanced by binding to bitter tastants, such as flufenamic acid and aristolochic acid. Regulated by cholesterol in a concentration-dependent manner. Gustducin-linked G-protein coupled receptor that plays a role in the perception of bitterness. The activity of this receptor stimulates GNAT3, activating the gustducin G-protein pathway. Likely plays a role in sensing the chemical composition of the gastrointestinal content and other extra-oral tissues via the inhibitory G-protein pathways. The protein is Taste receptor type 2 member 14 (TAS2R14) of Homo sapiens (Human).